Reading from the N-terminus, the 288-residue chain is Small ribosomal subunit protein uS2 (288 aa).

A disordered region spans residues 255–288; the sequence is ANNRDHKNNKNNSTIDNAENLKEENLVGGSNNES.

It belongs to the universal ribosomal protein uS2 family.

The protein is Small ribosomal subunit protein uS2 of Ehrlichia chaffeensis (strain ATCC CRL-10679 / Arkansas).